A 26-amino-acid polypeptide reads, in one-letter code: uncharacterized protein (26 aa).

It localises to the plastid. It is found in the chloroplast. This is an uncharacterized protein from Trieres chinensis (Marine centric diatom).